Reading from the N-terminus, the 371-residue chain is tRNA-specific 2-thiouridylase MnmA (371 aa).

Residues 13 to 20 (GMSGGVDS) and Met-39 each bind ATP. The segment at 99 to 101 (NPD) is interaction with target base in tRNA. Cys-104 (nucleophile) is an active-site residue. A disulfide bridge connects residues Cys-104 and Cys-200. Gly-128 provides a ligand contact to ATP. Residues 150 to 152 (KDQ) form an interaction with tRNA region. Cys-200 (cysteine persulfide intermediate) is an active-site residue. The tract at residues 308 to 309 (RY) is interaction with tRNA.

The protein belongs to the MnmA/TRMU family.

The protein resides in the cytoplasm. It carries out the reaction S-sulfanyl-L-cysteinyl-[protein] + uridine(34) in tRNA + AH2 + ATP = 2-thiouridine(34) in tRNA + L-cysteinyl-[protein] + A + AMP + diphosphate + H(+). In terms of biological role, catalyzes the 2-thiolation of uridine at the wobble position (U34) of tRNA, leading to the formation of s(2)U34. In Bacillus mycoides (strain KBAB4) (Bacillus weihenstephanensis), this protein is tRNA-specific 2-thiouridylase MnmA.